A 689-amino-acid chain; its full sequence is Methionine--tRNA ligase (689 aa).

A 'HIGH' region motif is present at residues 15 to 25 (PYANGPVHIGH). Residues Cys-147, Cys-150, Cys-160, and Cys-163 each contribute to the Zn(2+) site. The 'KMSKS' region signature appears at 342–346 (KISTS). Position 345 (Thr-345) interacts with ATP. The region spanning 588-689 (DFAKMDIRVA…AVVNAGSMIG (102 aa)) is the tRNA-binding domain.

The protein belongs to the class-I aminoacyl-tRNA synthetase family. MetG type 1 subfamily. As to quaternary structure, homodimer. Zn(2+) serves as cofactor.

It is found in the cytoplasm. The enzyme catalyses tRNA(Met) + L-methionine + ATP = L-methionyl-tRNA(Met) + AMP + diphosphate. Is required not only for elongation of protein synthesis but also for the initiation of all mRNA translation through initiator tRNA(fMet) aminoacylation. The protein is Methionine--tRNA ligase of Cytophaga hutchinsonii (strain ATCC 33406 / DSM 1761 / CIP 103989 / NBRC 15051 / NCIMB 9469 / D465).